A 177-amino-acid polypeptide reads, in one-letter code: Meiotic chromosome segregation protein C17A2.07c (177 aa).

Positions 71-90 are disordered; that stretch reads EDDSINKPTEEADEAPRTQL. Over residues 74-86 the composition is skewed to basic and acidic residues; the sequence is SINKPTEEADEAP.

The protein localises to the nucleus. Involved in meiotic chromosome segregation. The protein is Meiotic chromosome segregation protein C17A2.07c of Schizosaccharomyces pombe (strain 972 / ATCC 24843) (Fission yeast).